The following is a 162-amino-acid chain: Putative ethylene-responsive transcription factor ERF121 (162 aa).

Disordered regions lie at residues 1–21 (MDYS…PPNL), 84–103 (IKQE…KWSA), and 139–162 (KRSA…GGDD). Over residues 87-98 (EKKHKGVRKKPS) the composition is skewed to basic residues. A DNA-binding region (AP2/ERF) is located at residues 89–146 (KHKGVRKKPSGKWSAEIWDPSTRTRRWLGTFPTAEMAADAYDEAAAALVEKRSARRGS).

The protein belongs to the AP2/ERF transcription factor family. ERF subfamily.

The protein resides in the nucleus. Functionally, probably acts as a transcriptional activator. Binds to the GCC-box pathogenesis-related promoter element. May be involved in the regulation of gene expression by stress factors and by components of stress signal transduction pathways. This is Putative ethylene-responsive transcription factor ERF121 (ERF121) from Arabidopsis thaliana (Mouse-ear cress).